The sequence spans 76 residues: cAMP-dependent protein kinase inhibitor alpha (76 aa).

T2 is subject to N-acetylthreonine. The disordered stretch occupies residues 49-76; sequence KTEGEEDAQRNSTEQSGEAQGEAAKSES.

The protein belongs to the PKI family.

In terms of biological role, extremely potent competitive inhibitor of cAMP-dependent protein kinase activity, this protein interacts with the catalytic subunit of the enzyme after the cAMP-induced dissociation of its regulatory chains. The protein is cAMP-dependent protein kinase inhibitor alpha (PKIA) of Bos taurus (Bovine).